We begin with the raw amino-acid sequence, 484 residues long: 60S ribosome subunit biogenesis protein NOP8 (484 aa).

In terms of domain architecture, RRM spans 7–83 (KRIFVGNIFH…NILKVDEAKP (77 aa)). Serine 234, serine 239, and serine 268 each carry phosphoserine. The tract at residues 260–330 (DKPMTLNDSD…EGDGQEDNEF (71 aa)) is disordered. Positions 320-329 (DEGDGQEDNE) are enriched in acidic residues. A Phosphoserine modification is found at serine 370.

As to quaternary structure, interacts with NIP7 and RRP43. Together with DBP6, URB1, URB2 and RSA3, forms an RNA-independent complex, which is required during early maturation of nascent 60S ribosomal subunits.

It is found in the nucleus. The protein localises to the nucleolus. Functionally, required for 60S ribosomal subunit synthesis. May be involved in assembly reactions occurring within late pre-ribosomal particles. This chain is 60S ribosome subunit biogenesis protein NOP8 (NOP8), found in Saccharomyces cerevisiae (strain ATCC 204508 / S288c) (Baker's yeast).